The following is a 1208-amino-acid chain: Transient receptor potential cation channel subfamily M member 4 (1208 aa).

Residues 1–776 (MVGQEKEQSW…SYFWGAPVTA (776 aa)) are Cytoplasmic-facing. Residues Arg-172, Arg-215, and Leu-226 each coordinate ATP. Ca(2+) is bound by residues Asp-271, Ala-393, Asp-396, and Glu-397. 2 residues coordinate ATP: Arg-422 and Gly-449. A phosphoserine mark is found at Ser-527 and Ser-538. A helical transmembrane segment spans residues 777–797 (FLGNVVSYLLFLLLFAHVLLV). At 798–808 (DFQPTKPGVFE) the chain is on the extracellular side. Residues 809 to 829 (LLLYFWAFTLLCEELRQGLGG) form a helical membrane-spanning segment. Residues Glu-822 and Gln-825 each coordinate Ca(2+). Over 830-857 (GWGTLANGGPGPGKAPLRHRLHLYLLDT) the chain is Cytoplasmic. Residues 858 to 878 (WNQCDLLALTCFLLGVGCRLT) form a helical membrane-spanning segment. Ca(2+) is bound by residues Asn-859 and Asp-862. The Extracellular segment spans residues 879–880 (PG). The chain crosses the membrane as a helical span at residues 881–904 (LFDLGRTVLCLDFMIFTLRLLHIF). Topologically, residues 905–924 (TVNKQLGPKIVIVSKMMKDV) are cytoplasmic. The helical transmembrane segment at 925 to 945 (FFFLFFLCVWLVAYGVATEGI) threads the bilayer. The Extracellular portion of the chain corresponds to 946–957 (LRPQDRSLPSIL). The pore-forming intramembrane region spans 958–978 (RRVFYRPYLQIFGQIPQEEMD). A Selectivity filter motif is present at residues 969 to 971 (FGQ). Over 979–1013 (VALMNPSNCSAERGSWAHPEGPVAGSCVSQYANWL) the chain is Extracellular. Residues Cys-987 and Cys-1005 are joined by a disulfide bond. The chain crosses the membrane as a helical span at residues 1014-1034 (VVLLLIVFLLVANILLLNLLI). Residues 1035–1208 (AMFSYTFNKV…PPPSPTGSKD (174 aa)) lie on the Cytoplasmic side of the membrane. A calmodulin-binding region spans residues 1070-1170 (APPLIIISHL…EYDRRLRGLE (101 aa)). A coiled-coil region spans residues 1128 to 1180 (LAQARDKRDSDSERLKRTSQKVDTALKQLGQIREYDRRLRGLEREVQHCSRVL). The segment at 1130 to 1135 (QARDKR) is mediates modulation by decavanadate and PIP2-binding. 2 positions are modified to phosphoserine; by PKC: Ser-1139 and Ser-1146. Residues 1189-1208 (HSALLPPGGPPPPSPTGSKD) form a disordered region. Residues 1195–1208 (PGGPPPPSPTGSKD) are compositionally biased toward pro residues.

Belongs to the transient receptor (TC 1.A.4) family. LTrpC subfamily. TRPM4 sub-subfamily. In terms of assembly, homotetramer. Post-translationally, phosphorylation by PKC leads to increase the sensitivity to Ca(2+). In terms of processing, sumoylated. Desumoylated by SENP1. As to expression, isoform 1 is highly expressed in the testis with a moderate expression in the brain, spleen and thymus. Isoform 2 is only expressed in the brain and spleen.

The protein localises to the cell membrane. It localises to the endoplasmic reticulum. The protein resides in the golgi apparatus. The catalysed reaction is Na(+)(in) = Na(+)(out). It carries out the reaction K(+)(in) = K(+)(out). With respect to regulation, gating is voltage-dependent and repressed by decavanadate. Calmodulin-binding confers the Ca(2+) sensitivity. ATP is able to restore Ca(2+) sensitivity after desensitization. Phosphatidylinositol 4,5-bisphosphate (PIP2)-binding strongly enhances activity, by increasing the channel's Ca(2+) sensitivity and shifting its voltage dependence of activation towards negative potentials. Activity is also enhanced by 3,5-bis(trifluoromethyl)pyrazole derivative (BTP2). Exhibits pronounced temperature sensitivity, with activities strongly intensifying near physiological temperatures. TRPM4 can adopt distinct conformations at different temperatures, markedly influencing where and how ligands interact with them. Functionally, calcium-activated selective cation channel that mediates membrane depolarization. While it is activated by increase in intracellular Ca(2+), it is impermeable to it. Mediates transport of monovalent cations (Na(+) &gt; K(+) &gt; Cs(+) &gt; Li(+)), leading to depolarize the membrane. It thereby plays a central role in cadiomyocytes, neurons from entorhinal cortex, dorsal root and vomeronasal neurons, endocrine pancreas cells, kidney epithelial cells, cochlea hair cells etc. Participates in T-cell activation by modulating Ca(2+) oscillations after T lymphocyte activation, which is required for NFAT-dependent IL2 production. Involved in myogenic constriction of cerebral arteries. Controls insulin secretion in pancreatic beta-cells. May also be involved in pacemaking or could cause irregular electrical activity under conditions of Ca(2+) overload. Affects T-helper 1 (Th1) and T-helper 2 (Th2) cell motility and cytokine production through differential regulation of calcium signaling and NFATC1 localization. Enhances cell proliferation through up-regulation of the beta-catenin signaling pathway. Plays a role in keratinocyte differentiation. In terms of biological role, lacks channel activity. The protein is Transient receptor potential cation channel subfamily M member 4 (Trpm4) of Rattus norvegicus (Rat).